A 365-amino-acid polypeptide reads, in one-letter code: Chorismate synthase (365 aa).

Basic and acidic residues predominate over residues 41–51 (IQKELDRRRPG). Residues 41–62 (IQKELDRRRPGQSEVSTPRSEA) form a disordered region. An NADP(+)-binding site is contributed by arginine 48. Residues 125–127 (RSS), glycine 285, 300–304 (KPTPS), and arginine 327 contribute to the FMN site.

This sequence belongs to the chorismate synthase family. Requires FMNH2 as cofactor.

It carries out the reaction 5-O-(1-carboxyvinyl)-3-phosphoshikimate = chorismate + phosphate. Its pathway is metabolic intermediate biosynthesis; chorismate biosynthesis; chorismate from D-erythrose 4-phosphate and phosphoenolpyruvate: step 7/7. Its function is as follows. Catalyzes the anti-1,4-elimination of the C-3 phosphate and the C-6 proR hydrogen from 5-enolpyruvylshikimate-3-phosphate (EPSP) to yield chorismate, which is the branch point compound that serves as the starting substrate for the three terminal pathways of aromatic amino acid biosynthesis. This reaction introduces a second double bond into the aromatic ring system. The protein is Chorismate synthase of Methanosarcina mazei (strain ATCC BAA-159 / DSM 3647 / Goe1 / Go1 / JCM 11833 / OCM 88) (Methanosarcina frisia).